A 396-amino-acid polypeptide reads, in one-letter code: Elongation factor Tu (396 aa).

Residues 10-206 form the tr-type G domain; it reads KPHVNVGTIG…TLDEYIPEPE (197 aa). The G1 stretch occupies residues 19-26; the sequence is GHVDHGKT. A GTP-binding site is contributed by 19–26; it reads GHVDHGKT. Thr26 lines the Mg(2+) pocket. The interval 60-64 is G2; sequence GITIA. Residues 81-84 form a G3 region; it reads DCPG. Residues 81-85 and 136-139 contribute to the GTP site; these read DCPGH and NKAD. The interval 136-139 is G4; that stretch reads NKAD. The interval 174–176 is G5; sequence SAL.

It belongs to the TRAFAC class translation factor GTPase superfamily. Classic translation factor GTPase family. EF-Tu/EF-1A subfamily. In terms of assembly, monomer.

It localises to the cytoplasm. The catalysed reaction is GTP + H2O = GDP + phosphate + H(+). Functionally, GTP hydrolase that promotes the GTP-dependent binding of aminoacyl-tRNA to the A-site of ribosomes during protein biosynthesis. This is Elongation factor Tu from Alcanivorax borkumensis (strain ATCC 700651 / DSM 11573 / NCIMB 13689 / SK2).